The chain runs to 843 residues: Glycogen phosphorylase, brain form (843 aa).

Position 2 is an N-acetylalanine (A2). The residue at position 15 (S15) is a Phosphoserine; by PHK; in form phosphorylase A. 3 residues coordinate AMP: D43, Y197, and R310. A Phosphotyrosine modification is found at Y197. Y473 is subject to Phosphotyrosine. K569 lines the pyridoxal 5'-phosphate pocket. Positions 677–678 are pyridoxal 5'-phosphate; that stretch reads TG. An N6-(pyridoxal phosphate)lysine modification is found at K681.

Belongs to the glycogen phosphorylase family. In terms of assembly, homodimer. Dimers associate into a tetramer to form the enzymatically active phosphorylase A. Pyridoxal 5'-phosphate serves as cofactor. Phosphorylated. Phosphorylation of Ser-15 converts phosphorylase B (unphosphorylated) to phosphorylase A.

It carries out the reaction [(1-&gt;4)-alpha-D-glucosyl](n) + phosphate = [(1-&gt;4)-alpha-D-glucosyl](n-1) + alpha-D-glucose 1-phosphate. Its activity is regulated as follows. Activity of phosphorylase is controlled both by allosteric means (through the non-covalent binding of metabolites) and by covalent modification. Thus AMP allosterically activates, whereas ATP, ADP, and glucose-6-phosphate allosterically inhibit, phosphorylase B. Activated upon phosphorylation. Glycogen phosphorylase that regulates glycogen mobilization. Phosphorylase is an important allosteric enzyme in carbohydrate metabolism. Enzymes from different sources differ in their regulatory mechanisms and in their natural substrates. However, all known phosphorylases share catalytic and structural properties. This chain is Glycogen phosphorylase, brain form, found in Homo sapiens (Human).